The sequence spans 928 residues: Probable outer membrane protein pmp11 (928 aa).

The N-terminal stretch at 1 to 24 (MKTSIPWVLVSSVLAFSCHLQSLA) is a signal peptide. In terms of domain architecture, Autotransporter spans 627-928 (GMEHKQGFWV…NVDVGTKLRF (302 aa)).

It belongs to the PMP outer membrane protein family.

The protein resides in the secreted. It localises to the cell wall. It is found in the cell outer membrane. The protein is Probable outer membrane protein pmp11 (pmp11) of Chlamydia pneumoniae (Chlamydophila pneumoniae).